Reading from the N-terminus, the 220-residue chain is Ribosomal RNA large subunit methyltransferase E (220 aa).

S-adenosyl-L-methionine is bound by residues glycine 60, tryptophan 62, aspartate 92, aspartate 108, and aspartate 133. The Proton acceptor role is filled by lysine 173. Residues 195–220 (APRKPKASRDKSSETFILGRHLKRPR) are disordered.

Belongs to the class I-like SAM-binding methyltransferase superfamily. RNA methyltransferase RlmE family.

The protein localises to the cytoplasm. The catalysed reaction is uridine(2552) in 23S rRNA + S-adenosyl-L-methionine = 2'-O-methyluridine(2552) in 23S rRNA + S-adenosyl-L-homocysteine + H(+). Functionally, specifically methylates the uridine in position 2552 of 23S rRNA at the 2'-O position of the ribose in the fully assembled 50S ribosomal subunit. The sequence is that of Ribosomal RNA large subunit methyltransferase E from Burkholderia lata (strain ATCC 17760 / DSM 23089 / LMG 22485 / NCIMB 9086 / R18194 / 383).